The chain runs to 95 residues: Aspartyl/glutamyl-tRNA(Asn/Gln) amidotransferase subunit C (95 aa).

It belongs to the GatC family. Heterotrimer of A, B and C subunits.

The catalysed reaction is L-glutamyl-tRNA(Gln) + L-glutamine + ATP + H2O = L-glutaminyl-tRNA(Gln) + L-glutamate + ADP + phosphate + H(+). The enzyme catalyses L-aspartyl-tRNA(Asn) + L-glutamine + ATP + H2O = L-asparaginyl-tRNA(Asn) + L-glutamate + ADP + phosphate + 2 H(+). Allows the formation of correctly charged Asn-tRNA(Asn) or Gln-tRNA(Gln) through the transamidation of misacylated Asp-tRNA(Asn) or Glu-tRNA(Gln) in organisms which lack either or both of asparaginyl-tRNA or glutaminyl-tRNA synthetases. The reaction takes place in the presence of glutamine and ATP through an activated phospho-Asp-tRNA(Asn) or phospho-Glu-tRNA(Gln). The protein is Aspartyl/glutamyl-tRNA(Asn/Gln) amidotransferase subunit C of Brucella abortus (strain S19).